A 502-amino-acid polypeptide reads, in one-letter code: Lanosterol 14-alpha demethylase (502 aa).

A helical membrane pass occupies residues 22–42 (GNLASMLLIACAFTLSLVYLF). Cys448 contacts heme.

This sequence belongs to the cytochrome P450 family. Heme is required as a cofactor. In terms of processing, ubiquitinated by MARCHF6, leading to proteasomal degradation.

Its subcellular location is the endoplasmic reticulum membrane. It localises to the microsome membrane. It catalyses the reaction a 14alpha-methyl steroid + 3 reduced [NADPH--hemoprotein reductase] + 3 O2 = a Delta(14) steroid + formate + 3 oxidized [NADPH--hemoprotein reductase] + 4 H2O + 4 H(+). It carries out the reaction lanosterol + 3 reduced [NADPH--hemoprotein reductase] + 3 O2 = 4,4-dimethyl-5alpha-cholesta-8,14,24-trien-3beta-ol + formate + 3 oxidized [NADPH--hemoprotein reductase] + 4 H2O + 4 H(+). The enzyme catalyses 24,25-dihydrolanosterol + 3 reduced [NADPH--hemoprotein reductase] + 3 O2 = 4,4-dimethyl-8,14-cholestadien-3beta-ol + formate + 3 oxidized [NADPH--hemoprotein reductase] + 4 H2O + 4 H(+). The catalysed reaction is a 14alpha-methyl steroid + reduced [NADPH--hemoprotein reductase] + O2 = a 14alpha-hydroxymethyl steroid + oxidized [NADPH--hemoprotein reductase] + H2O + H(+). It catalyses the reaction a 14alpha-hydroxymethyl steroid + reduced [NADPH--hemoprotein reductase] + O2 = a 14alpha-formyl steroid + oxidized [NADPH--hemoprotein reductase] + 2 H2O + H(+). It carries out the reaction a 14alpha-formyl steroid + reduced [NADPH--hemoprotein reductase] + O2 = a Delta(14) steroid + formate + oxidized [NADPH--hemoprotein reductase] + H2O + 2 H(+). The enzyme catalyses lanosterol + reduced [NADPH--hemoprotein reductase] + O2 = 32-hydroxylanosterol + oxidized [NADPH--hemoprotein reductase] + H2O + H(+). The catalysed reaction is 32-hydroxylanosterol + reduced [NADPH--hemoprotein reductase] + O2 = 32-oxolanosterol + oxidized [NADPH--hemoprotein reductase] + 2 H2O + H(+). It catalyses the reaction 32-oxolanosterol + reduced [NADPH--hemoprotein reductase] + O2 = 4,4-dimethyl-5alpha-cholesta-8,14,24-trien-3beta-ol + formate + oxidized [NADPH--hemoprotein reductase] + H2O + 2 H(+). It carries out the reaction 24,25-dihydrolanosterol + reduced [NADPH--hemoprotein reductase] + O2 = 32-hydroxy-24,25-dihydrolanosterol + oxidized [NADPH--hemoprotein reductase] + H2O + H(+). The enzyme catalyses 32-hydroxy-24,25-dihydrolanosterol + reduced [NADPH--hemoprotein reductase] + O2 = 32-oxo-24,25-dihydrolanosterol + oxidized [NADPH--hemoprotein reductase] + 2 H2O + H(+). The catalysed reaction is 32-oxo-24,25-dihydrolanosterol + reduced [NADPH--hemoprotein reductase] + O2 = 4,4-dimethyl-8,14-cholestadien-3beta-ol + formate + oxidized [NADPH--hemoprotein reductase] + H2O + 2 H(+). The protein operates within steroid biosynthesis; zymosterol biosynthesis; zymosterol from lanosterol: step 1/6. Inhibited by azalanstat. Inhibited by azole antifungal agents ketoconazole, itraconazole and fluconazole. Its function is as follows. Sterol 14alpha-demethylase that plays a critical role in the cholesterol biosynthesis pathway, being cholesterol the major sterol component in mammalian membranes as well as a precursor for bile acid and steroid hormone synthesis. Cytochrome P450 monooxygenase that catalyzes the three-step oxidative removal of the 14alpha-methyl group (C-32) of sterols such as lanosterol (lanosta-8,24-dien-3beta-ol) and 24,25-dihydrolanosterol (DHL) in the form of formate, and converts the sterols to 4,4-dimethyl-5alpha-cholesta-8,14,24-trien-3beta-ol and 4,4-dimethyl-8,14-cholestadien-3beta-ol, respectively, which are intermediates of cholesterol biosynthesis. Can also demethylate substrates not intrinsic to mammals, such as eburicol (24-methylene-24,25-dihydrolanosterol), but at a lower rate than DHL. The sequence is that of Lanosterol 14-alpha demethylase from Bos taurus (Bovine).